The sequence spans 467 residues: Mitochondrial distribution and morphology protein 10 (467 aa).

It belongs to the MDM10 family. As to quaternary structure, component of the ER-mitochondria encounter structure (ERMES) or MDM complex, composed of MMM1, MDM10, MDM12 and MDM34. Associates with the mitochondrial outer membrane sorting assembly machinery SAM(core) complex.

The protein localises to the mitochondrion outer membrane. Functionally, component of the ERMES/MDM complex, which serves as a molecular tether to connect the endoplasmic reticulum and mitochondria. Components of this complex are involved in the control of mitochondrial shape and protein biogenesis and may function in phospholipid exchange. MDM10 is involved in the late assembly steps of the general translocase of the mitochondrial outer membrane (TOM complex). Functions in the TOM40-specific route of the assembly of outer membrane beta-barrel proteins, including the association of TOM40 with the receptor TOM22 and small TOM proteins. Can associate with the SAM(core) complex as well as the MDM12-MMM1 complex, both involved in late steps of the major beta-barrel assembly pathway, that is responsible for biogenesis of all outer membrane beta-barrel proteins. May act as a switch that shuttles between both complexes and channels precursor proteins into the TOM40-specific pathway. Plays a role in mitochondrial morphology and in the inheritance of mitochondria. The chain is Mitochondrial distribution and morphology protein 10 from Ajellomyces capsulatus (strain G186AR / H82 / ATCC MYA-2454 / RMSCC 2432) (Darling's disease fungus).